A 676-amino-acid chain; its full sequence is Probable ERAD-associated E3 ubiquitin-protein ligase ASI1 (676 aa).

The Perinuclear space segment spans residues 1–78 (MSTNILQHVK…TLQLAKVGIR (78 aa)). Residues asparagine 24, asparagine 34, asparagine 46, and asparagine 66 are each glycosylated (N-linked (GlcNAc...) asparagine). A helical membrane pass occupies residues 79 to 99 (MFFSYSVSKYAVLCFSTAIIL). Over 100-126 (NRLTVMSSLRSNSTNIRLPLWSKTLLH) the chain is Nuclear. Residues 127–147 (LVATLSLVKALLQILSQFGLM) traverse the membrane as a helical segment. Topologically, residues 148-156 (HELHVSDTD) are perinuclear space. The chain crosses the membrane as a helical span at residues 157–177 (FYALSVYLFVALSDCIEIFIS). At 178–181 (STTN) the chain is on the nuclear side. A helical transmembrane segment spans residues 182-202 (VPSLICSDFSIWGLSLNLYII). Residues 203 to 277 (SKMPAGQQHI…NICLIHNYFP (75 aa)) lie on the Perinuclear space side of the membrane. A helical membrane pass occupies residues 278–298 (GFFYISTILLASIGIFLKALF). Residues 299-676 (TSNPFRSLYS…VKGYSKLNIV (378 aa)) lie on the Nuclear side of the membrane. An RING-type; atypical zinc finger spans residues 624–664 (CLICKVNKRNIVTWPCRCLALCDDCRISLGYKGFATCVSCD).

As to quaternary structure, component of the Asi complex, which contains ASI1, ASI2 and ASI3. Interacts directly with ASI1.

The protein resides in the nucleus inner membrane. It catalyses the reaction S-ubiquitinyl-[E2 ubiquitin-conjugating enzyme]-L-cysteine + [acceptor protein]-L-lysine = [E2 ubiquitin-conjugating enzyme]-L-cysteine + N(6)-ubiquitinyl-[acceptor protein]-L-lysine.. Functionally, part of the nuclear inner membrane (INM)-specific branch of the ER-associated degradation (ERAD) pathway, required for the elimination of misfolded proteins in the INM, a specialized ER subdomain. Required for ERG11 degradation. Negative regulator of SPS-sensor signaling. Together with ASI2 and ASI3, prevents the unprocessed precursor forms of STP1 and STP2 that escape cytoplasmic anchoring from inducing SPS-sensor-regulated genes in the absence of inducing signals. Controls amino acid permease (AAP) gene expression in response to amino acid availability, a process mediated by the transcription factors STP1 and STP1. This is Probable ERAD-associated E3 ubiquitin-protein ligase ASI1 (ASI3) from Saccharomyces cerevisiae (strain ATCC 204508 / S288c) (Baker's yeast).